A 419-amino-acid chain; its full sequence is 3-isopropylmalate dehydratase large subunit (419 aa).

Positions 300, 360, and 363 each coordinate [4Fe-4S] cluster.

The protein belongs to the aconitase/IPM isomerase family. LeuC type 2 subfamily. Heterodimer of LeuC and LeuD. Requires [4Fe-4S] cluster as cofactor.

It catalyses the reaction (2R,3S)-3-isopropylmalate = (2S)-2-isopropylmalate. It participates in amino-acid biosynthesis; L-leucine biosynthesis; L-leucine from 3-methyl-2-oxobutanoate: step 2/4. Its function is as follows. Catalyzes the isomerization between 2-isopropylmalate and 3-isopropylmalate, via the formation of 2-isopropylmaleate. This Acetivibrio thermocellus (strain ATCC 27405 / DSM 1237 / JCM 9322 / NBRC 103400 / NCIMB 10682 / NRRL B-4536 / VPI 7372) (Clostridium thermocellum) protein is 3-isopropylmalate dehydratase large subunit.